The primary structure comprises 296 residues: tRNA dimethylallyltransferase (296 aa).

11–18 (GPTAVGKT) contacts ATP. Position 13–18 (13–18 (TAVGKT)) interacts with substrate. Residues 36 to 39 (DSQQ) are interaction with substrate tRNA.

Belongs to the IPP transferase family. As to quaternary structure, monomer. Requires Mg(2+) as cofactor.

The enzyme catalyses adenosine(37) in tRNA + dimethylallyl diphosphate = N(6)-dimethylallyladenosine(37) in tRNA + diphosphate. In terms of biological role, catalyzes the transfer of a dimethylallyl group onto the adenine at position 37 in tRNAs that read codons beginning with uridine, leading to the formation of N6-(dimethylallyl)adenosine (i(6)A). The chain is tRNA dimethylallyltransferase from Streptococcus agalactiae serotype III (strain NEM316).